The chain runs to 91 residues: MADDAAQAGDNAEYIKIKVVGQDSNEVHFRVKYGTSMAKLKKSYADRTGVAVNSLRFLFDGRRINDDDTPKTLEMEDDDVIEVYQEQLGGF.

In terms of domain architecture, Ubiquitin-like spans 13-91; sequence EYIKIKVVGQ…EVYQEQLGGF (79 aa). Gly90 participates in a covalent cross-link: Glycyl lysine isopeptide (Gly-Lys) (interchain with K-? in acceptor proteins). Phe91 is a propeptide.

The protein belongs to the ubiquitin family. SUMO subfamily. In terms of assembly, covalently attached to tbx-2. Covalently attached to lin-1. Covalently attached to lin-11. Covalently attached to sop-2. Covalently attached to bet-1. Post-translationally, cleavage of precursor form by ulp-1 is necessary for function.

The protein localises to the cytoplasm. It is found in the nucleus. The protein resides in the cytoskeleton. Its subcellular location is the spindle. It localises to the chromosome. The protein localises to the microtubule organizing center. It is found in the centrosome. Ubiquitin-like protein which can be covalently attached to target lysines as a monomer. Does not seem to be involved in protein degradation and may function as an antagonist of ubiquitin in the degradation process. Plays a role in a number of cellular processes such as nuclear transport, DNA replication and repair, mitosis and signal transduction. Covalent attachment to its substrates requires prior activation by the E1 complex aos-1-uba-2 and linkage to the E2 enzyme ubc-9, and can be promoted by an E3 ligase such as gei-17. Required for embryonic development, fertility, vulval morphogenesis and inhibition of vulval cell fates. Probably by sumoylating bet-1, prevents muscle myosin depletion in aging adults probably by preventing myoblast growth factor receptor egl-15 overexpression. Plays a role in the attenuation of the let-60/ras pathway. Plays a role in male tail tip morphogenesis. Plays a role in the mitochondrial stress response with its covalent attachment to transcription factors dve-1 and afts-1 negatively regulating the mitochondrial unfolded protein response. The polypeptide is Small ubiquitin-related modifier (Caenorhabditis elegans).